Consider the following 245-residue polypeptide: MIIPALDLIDGTVVRLHQGDYARQRDYGNDPLPRLQDYAAQGAGVLHLVDLTGAKDPAKRQIPLIKTLVAGVNVPVQVGGGVRTEEDVAALLKAGVARVVIGSTAVKSPDVVKGWFERFGAQALVLALDVRIDEHGNKQVAVSGWQENSGVSLEQLVETYLPVGLKHVLCTDISRDGTLAGSNVSLYEEVCARYPQIAFQSSGGIGDIDDIAALRGTGVRGVIVGRALLEGKFTVKEAIQCWQNV.

The active-site Proton acceptor is the Asp7. Residue Asp129 is the Proton donor of the active site.

The protein belongs to the HisA/HisF family.

The protein localises to the cytoplasm. The enzyme catalyses 1-(5-phospho-beta-D-ribosyl)-5-[(5-phospho-beta-D-ribosylamino)methylideneamino]imidazole-4-carboxamide = 5-[(5-phospho-1-deoxy-D-ribulos-1-ylimino)methylamino]-1-(5-phospho-beta-D-ribosyl)imidazole-4-carboxamide. The protein operates within amino-acid biosynthesis; L-histidine biosynthesis; L-histidine from 5-phospho-alpha-D-ribose 1-diphosphate: step 4/9. The chain is 1-(5-phosphoribosyl)-5-[(5-phosphoribosylamino)methylideneamino] imidazole-4-carboxamide isomerase from Salmonella dublin (strain CT_02021853).